The following is a 231-amino-acid chain: Putative N-acetylmannosamine-6-phosphate 2-epimerase (231 aa).

The protein belongs to the NanE family.

The enzyme catalyses an N-acyl-D-glucosamine 6-phosphate = an N-acyl-D-mannosamine 6-phosphate. It functions in the pathway amino-sugar metabolism; N-acetylneuraminate degradation; D-fructose 6-phosphate from N-acetylneuraminate: step 3/5. Functionally, converts N-acetylmannosamine-6-phosphate (ManNAc-6-P) to N-acetylglucosamine-6-phosphate (GlcNAc-6-P). The protein is Putative N-acetylmannosamine-6-phosphate 2-epimerase of Listeria innocua serovar 6a (strain ATCC BAA-680 / CLIP 11262).